A 462-amino-acid polypeptide reads, in one-letter code: Bifunctional enzyme LpxC/FabZ (462 aa).

Residues 1–302 (MQKQQTLKDK…MARLIRKEIK (302 aa)) are UDP-3-O-acyl-N-acetylglucosamine deacetylase. Residues His-78, His-260, and Asp-264 each coordinate Zn(2+). Catalysis depends on His-287, which acts as the Proton donor. A 3-hydroxyacyl-[acyl-carrier-protein] dehydratase region spans residues 303–462 (QNEAQAPVYN…FMAQIIQNKE (160 aa)). His-364 is an active-site residue.

The protein in the N-terminal section; belongs to the LpxC family. This sequence in the C-terminal section; belongs to the thioester dehydratase family. It depends on Zn(2+) as a cofactor.

It is found in the cytoplasm. The catalysed reaction is a UDP-3-O-[(3R)-3-hydroxyacyl]-N-acetyl-alpha-D-glucosamine + H2O = a UDP-3-O-[(3R)-3-hydroxyacyl]-alpha-D-glucosamine + acetate. It catalyses the reaction a (3R)-hydroxyacyl-[ACP] = a (2E)-enoyl-[ACP] + H2O. The protein operates within glycolipid biosynthesis; lipid IV(A) biosynthesis; lipid IV(A) from (3R)-3-hydroxytetradecanoyl-[acyl-carrier-protein] and UDP-N-acetyl-alpha-D-glucosamine: step 2/6. Catalyzes the hydrolysis of UDP-3-O-myristoyl-N-acetylglucosamine to form UDP-3-O-myristoylglucosamine and acetate, the committed step in lipid A biosynthesis. Functionally, involved in unsaturated fatty acids biosynthesis. Catalyzes the dehydration of short chain beta-hydroxyacyl-ACPs and long chain saturated and unsaturated beta-hydroxyacyl-ACPs. This chain is Bifunctional enzyme LpxC/FabZ (lpxC/fabZ), found in Porphyromonas gingivalis (strain ATCC BAA-308 / W83).